Reading from the N-terminus, the 173-residue chain is 6,7-dimethyl-8-ribityllumazine synthase (173 aa).

5-amino-6-(D-ribitylamino)uracil is bound by residues Phe-24, 58–60, and 82–84; these read ALE and AVI. 87 to 88 lines the (2S)-2-hydroxy-3-oxobutyl phosphate pocket; sequence ET. The active-site Proton donor is the His-90. Asn-115 contacts 5-amino-6-(D-ribitylamino)uracil. Arg-129 contacts (2S)-2-hydroxy-3-oxobutyl phosphate. The tract at residues 150 to 173 is disordered; the sequence is ALEPEEDDEDDEDEDFDDEEDDGR. The segment covering 152-173 has biased composition (acidic residues); that stretch reads EPEEDDEDDEDEDFDDEEDDGR.

The protein belongs to the DMRL synthase family.

The enzyme catalyses (2S)-2-hydroxy-3-oxobutyl phosphate + 5-amino-6-(D-ribitylamino)uracil = 6,7-dimethyl-8-(1-D-ribityl)lumazine + phosphate + 2 H2O + H(+). Its pathway is cofactor biosynthesis; riboflavin biosynthesis; riboflavin from 2-hydroxy-3-oxobutyl phosphate and 5-amino-6-(D-ribitylamino)uracil: step 1/2. Catalyzes the formation of 6,7-dimethyl-8-ribityllumazine by condensation of 5-amino-6-(D-ribitylamino)uracil with 3,4-dihydroxy-2-butanone 4-phosphate. This is the penultimate step in the biosynthesis of riboflavin. The protein is 6,7-dimethyl-8-ribityllumazine synthase of Bordetella pertussis (strain Tohama I / ATCC BAA-589 / NCTC 13251).